A 110-amino-acid chain; its full sequence is Bowman-Birk type proteinase inhibitor (110 aa).

Positions 1–19 are cleaved as a signal peptide; it reads MVVLKVCLVLLFLVGGTTS. The propeptide occupies 20–39; it reads ANLRLSKLGLLMKSDHQHSN. Cystine bridges form between Cys47/Cys101, Cys48/Cys63, Cys51/Cys97, Cys53/Cys61, Cys71/Cys78, Cys75/Cys90, and Cys80/Cys88.

This sequence belongs to the Bowman-Birk serine protease inhibitor family.

Inhibitor of trypsin and of chymotrypsin. The sequence is that of Bowman-Birk type proteinase inhibitor from Glycine max (Soybean).